The following is a 771-amino-acid chain: Protein lin-54 homolog (771 aa).

Disordered stretches follow at residues 21 to 44 (AMDE…SAQV) and 68 to 105 (TNAK…IPSL). Low complexity predominate over residues 72-92 (STTSSTTQLLLTPSSSSSTTT). Residues Ser288, Ser292, and Ser308 each carry the phosphoserine modification. A CRC domain is found at 544–657 (PRKPCNCTRS…KCMGCKNFEE (114 aa)). The interval 546-559 (KPCNCTRSQCLKLY) is DNA-binding. Zn(2+) is bound by residues Cys548, Cys550, Cys555, Cys560, Cys562, Cys569, Cys572, Cys574, and Cys577. Residues 606–619 (IGKGKEGESDRRHS) form a linker region. Zn(2+) contacts are provided by Cys622, Cys624, Cys629, Cys634, Cys636, Cys643, Cys647, Cys649, and Cys652. The DNA-binding stretch occupies residues 622-635 (CNCKKSGCLKNYCE).

It belongs to the lin-54 family. Component of the DREAM complex.

It is found in the nucleus. In terms of biological role, component of the DREAM complex, a multiprotein complex that can both act as a transcription activator or repressor depending on the context. Specifically recognizes the consensus motif 5'-TTYRAA-3' in target DNA. The chain is Protein lin-54 homolog (lin54) from Danio rerio (Zebrafish).